We begin with the raw amino-acid sequence, 341 residues long: Phenylalanine--tRNA ligase alpha subunit (341 aa).

Position 256 (Glu-256) interacts with Mg(2+).

It belongs to the class-II aminoacyl-tRNA synthetase family. Phe-tRNA synthetase alpha subunit type 1 subfamily. Tetramer of two alpha and two beta subunits. Requires Mg(2+) as cofactor.

The protein resides in the cytoplasm. It carries out the reaction tRNA(Phe) + L-phenylalanine + ATP = L-phenylalanyl-tRNA(Phe) + AMP + diphosphate + H(+). This is Phenylalanine--tRNA ligase alpha subunit from Leptospira biflexa serovar Patoc (strain Patoc 1 / Ames).